The chain runs to 208 residues: Probable GTP-binding protein EngB (208 aa).

The EngB-type G domain occupies 23–205; the sequence is LTSEMVILGR…RQTLLKYLLT (183 aa). Residues 31 to 38, 57 to 61, 84 to 87, 154 to 157, and 182 to 184 contribute to the GTP site; these read GRSNVGKS, GKTRL, DLPG, TKFD, and FNA. Mg(2+) contacts are provided by Ser-38 and Thr-59.

The protein belongs to the TRAFAC class TrmE-Era-EngA-EngB-Septin-like GTPase superfamily. EngB GTPase family. Requires Mg(2+) as cofactor.

Functionally, necessary for normal cell division and for the maintenance of normal septation. The protein is Probable GTP-binding protein EngB of Helicobacter pylori (strain G27).